The following is a 122-amino-acid chain: Biogenesis of lysosome-related organelles complex 1 subunit BLS1 (122 aa).

The residue at position 33 (Ser33) is a Phosphoserine.

Belongs to the BLOC1S1 family. In terms of assembly, component of the biogenesis of lysosome-related organelles complex-1 (BLOC-1) composed of at least BLI1, BLS1, CNL1, KXD1, SNN1 and VAB2.

It is found in the endosome. Component of the biogenesis of lysosome-related organelles complex-1 (BLOC-1), a complex involved in endosomal cargo sorting. The sequence is that of Biogenesis of lysosome-related organelles complex 1 subunit BLS1 (BLS1) from Saccharomyces cerevisiae (strain RM11-1a) (Baker's yeast).